A 75-amino-acid polypeptide reads, in one-letter code: uncharacterized protein (75 aa).

The first 18 residues, 1-18, serve as a signal peptide directing secretion; it reads MRKYLSARSMCCSFFSCA.

This is an uncharacterized protein from Treponema pallidum (strain Nichols).